Reading from the N-terminus, the 133-residue chain is ATP synthase epsilon chain (133 aa).

The protein belongs to the ATPase epsilon chain family. F-type ATPases have 2 components, CF(1) - the catalytic core - and CF(0) - the membrane proton channel. CF(1) has five subunits: alpha(3), beta(3), gamma(1), delta(1), epsilon(1). CF(0) has three main subunits: a, b and c.

It localises to the cell membrane. Produces ATP from ADP in the presence of a proton gradient across the membrane. This Bacillus cereus (strain ATCC 14579 / DSM 31 / CCUG 7414 / JCM 2152 / NBRC 15305 / NCIMB 9373 / NCTC 2599 / NRRL B-3711) protein is ATP synthase epsilon chain.